A 429-amino-acid polypeptide reads, in one-letter code: Adenylosuccinate synthetase (429 aa).

GTP contacts are provided by residues 12–18 (GDEGKGK) and 40–42 (GHT). Catalysis depends on Asp-13, which acts as the Proton acceptor. Mg(2+) contacts are provided by Asp-13 and Gly-40. IMP is bound by residues 13-16 (DEGK), 38-41 (NAGH), Thr-128, Arg-142, Gln-223, Thr-238, and Arg-302. His-41 acts as the Proton donor in catalysis. 298–304 (VNTGRPR) contributes to the substrate binding site. Residues Arg-304, 330-332 (KLD), and 412-414 (GVG) contribute to the GTP site.

This sequence belongs to the adenylosuccinate synthetase family. In terms of assembly, homodimer. Mg(2+) serves as cofactor.

Its subcellular location is the cytoplasm. It carries out the reaction IMP + L-aspartate + GTP = N(6)-(1,2-dicarboxyethyl)-AMP + GDP + phosphate + 2 H(+). Its pathway is purine metabolism; AMP biosynthesis via de novo pathway; AMP from IMP: step 1/2. Its function is as follows. Plays an important role in the de novo pathway of purine nucleotide biosynthesis. Catalyzes the first committed step in the biosynthesis of AMP from IMP. The sequence is that of Adenylosuccinate synthetase from Kocuria rhizophila (strain ATCC 9341 / DSM 348 / NBRC 103217 / DC2201).